Consider the following 202-residue polypeptide: Putative 3-methyladenine DNA glycosylase (202 aa).

The protein belongs to the DNA glycosylase MPG family.

The chain is Putative 3-methyladenine DNA glycosylase from Rhodopseudomonas palustris (strain BisB5).